The following is a 502-amino-acid chain: UPF0371 protein CLM_0396 (502 aa).

This sequence belongs to the UPF0371 family.

This chain is UPF0371 protein CLM_0396, found in Clostridium botulinum (strain Kyoto / Type A2).